Here is a 124-residue protein sequence, read N- to C-terminus: Large ribosomal subunit protein uL18 (124 aa).

It belongs to the universal ribosomal protein uL18 family. In terms of assembly, part of the 50S ribosomal subunit; part of the 5S rRNA/L5/L18/L25 subcomplex. Contacts the 5S and 23S rRNAs.

Its function is as follows. This is one of the proteins that bind and probably mediate the attachment of the 5S RNA into the large ribosomal subunit, where it forms part of the central protuberance. This chain is Large ribosomal subunit protein uL18, found in Thermomicrobium roseum (strain ATCC 27502 / DSM 5159 / P-2).